Reading from the N-terminus, the 280-residue chain is Nitrogenase iron protein (280 aa).

Residue 8–15 (GKGGIGKS) coordinates ATP. Cysteine 95 lines the [4Fe-4S] cluster pocket. Arginine 98 carries the ADP-ribosylarginine; by dinitrogenase reductase ADP-ribosyltransferase modification. Residue cysteine 128 coordinates [4Fe-4S] cluster.

The protein belongs to the NifH/BchL/ChlL family. Homodimer. It depends on [4Fe-4S] cluster as a cofactor. The reversible ADP-ribosylation of Arg-98 inactivates the nitrogenase reductase and regulates nitrogenase activity.

It catalyses the reaction N2 + 8 reduced [2Fe-2S]-[ferredoxin] + 16 ATP + 16 H2O = H2 + 8 oxidized [2Fe-2S]-[ferredoxin] + 2 NH4(+) + 16 ADP + 16 phosphate + 6 H(+). The key enzymatic reactions in nitrogen fixation are catalyzed by the nitrogenase complex, which has 2 components: the iron protein and the molybdenum-iron protein. The sequence is that of Nitrogenase iron protein from Methanospirillum hungatei JF-1 (strain ATCC 27890 / DSM 864 / NBRC 100397 / JF-1).